A 773-amino-acid chain; its full sequence is Beta-hexosaminidase B (773 aa).

Residues 1–19 form the signal peptide; that stretch reads MKFNRLMALLFGVSSPLYA. 3 disulfides stabilise this stretch: C46–C53, C389–C397, and C496–C542. Catalysis depends on E531, which acts as the Proton donor.

The protein belongs to the glycosyl hydrolase 20 family.

The catalysed reaction is Hydrolysis of terminal non-reducing N-acetyl-D-hexosamine residues in N-acetyl-beta-D-hexosaminides.. This chain is Beta-hexosaminidase B (nag096), found in Pseudoalteromonas piscicida.